We begin with the raw amino-acid sequence, 145 residues long: Large ribosomal subunit protein uL15 (145 aa).

The disordered stretch occupies residues methionine 1 to histidine 58. Gly residues-rich tracts occupy residues arginine 21–serine 31 and serine 42–glycine 52.

It belongs to the universal ribosomal protein uL15 family. As to quaternary structure, part of the 50S ribosomal subunit.

Functionally, binds to the 23S rRNA. In Desulforapulum autotrophicum (strain ATCC 43914 / DSM 3382 / VKM B-1955 / HRM2) (Desulfobacterium autotrophicum), this protein is Large ribosomal subunit protein uL15.